Consider the following 583-residue polypeptide: Protein cps3 (583 aa).

2 consecutive C3H1-type zinc fingers follow at residues 35–62 and 64–91; these read SLQH…HDLE and ATEK…HVLP. Disordered regions lie at residues 318-346, 471-490, and 504-532; these read LGRP…NGST, KVSS…YNGT, and RQES…KNLG. Composition is skewed to polar residues over residues 323–334, 475–490, and 513–532; these read KSPSVPTSVGSN, NLNS…YNGT, and PSLN…KNLG.

It is found in the cytoplasm. Responsible for supersensitivity to the spindle poison, isopropyl N-3-chlorophenyl carbamate. Has a role in meiosis. This is Protein cps3 (cps3) from Schizosaccharomyces pombe (strain 972 / ATCC 24843) (Fission yeast).